Consider the following 510-residue polypeptide: GMP synthase [glutamine-hydrolyzing] (510 aa).

The 191-residue stretch at 5–195 folds into the Glutamine amidotransferase type-1 domain; the sequence is LVIVLDFGGQ…LFNIADLSAD (191 aa). Residue cysteine 82 is the Nucleophile of the active site. Catalysis depends on residues histidine 169 and glutamate 171. One can recognise a GMPS ATP-PPase domain in the interval 196–385; sequence WTMGSYIEET…LGLHREIVER (190 aa). Position 223 to 229 (223 to 229) interacts with ATP; it reads SGGIDST.

In terms of assembly, homodimer.

It carries out the reaction XMP + L-glutamine + ATP + H2O = GMP + L-glutamate + AMP + diphosphate + 2 H(+). It participates in purine metabolism; GMP biosynthesis; GMP from XMP (L-Gln route): step 1/1. In terms of biological role, catalyzes the synthesis of GMP from XMP. This chain is GMP synthase [glutamine-hydrolyzing], found in Natranaerobius thermophilus (strain ATCC BAA-1301 / DSM 18059 / JW/NM-WN-LF).